Consider the following 270-residue polypeptide: tRNA (guanine-N(1)-)-methyltransferase (270 aa).

S-adenosyl-L-methionine is bound by residues G117 and 137-142 (IGDYVL).

It belongs to the RNA methyltransferase TrmD family. As to quaternary structure, homodimer.

Its subcellular location is the cytoplasm. The enzyme catalyses guanosine(37) in tRNA + S-adenosyl-L-methionine = N(1)-methylguanosine(37) in tRNA + S-adenosyl-L-homocysteine + H(+). Its function is as follows. Specifically methylates guanosine-37 in various tRNAs. In Heliobacterium modesticaldum (strain ATCC 51547 / Ice1), this protein is tRNA (guanine-N(1)-)-methyltransferase.